An 853-amino-acid polypeptide reads, in one-letter code: DNA mismatch repair protein MutS (853 aa).

614 to 621 contacts ATP; sequence GPNMGGKS.

This sequence belongs to the DNA mismatch repair MutS family.

In terms of biological role, this protein is involved in the repair of mismatches in DNA. It is possible that it carries out the mismatch recognition step. This protein has a weak ATPase activity. In Escherichia coli (strain 55989 / EAEC), this protein is DNA mismatch repair protein MutS.